Reading from the N-terminus, the 350-residue chain is Outer membrane protein A (350 aa).

Residues 1-21 (MKKTAIAIAVALAGFATVAQA) form the signal peptide. Beta stranded transmembrane passes span 27 to 37 (TWYAGGKLGWS), 59 to 70 (QLGAGAFGGYQV), 74 to 82 (LGFEMGYDW), 100 to 111 (QAVQLTAKLGYP), 116 to 124 (LDIYTRLGG), 146 to 155 (PVFAGGVEWA), 160 to 167 (IATRLEYQ), and 186 to 194 (MLSVGVSYR). 4 tandem repeats follow at residues 205–206 (AP), 207–208 (AP), 209–210 (AP), and 211–212 (AP). Positions 205–212 (APAPAPAP) are 4 X 2 AA tandem repeats of A-P. Residues 214 to 342 (VTTKTFTLKS…RVAIEVKGYK (129 aa)) form the OmpA-like domain. A disulfide bond links Cys315 and Cys327.

Belongs to the outer membrane OOP (TC 1.B.6) superfamily. OmpA family. Monomer and homodimer.

Its subcellular location is the cell outer membrane. In terms of biological role, with TolR probably plays a role in maintaining the position of the peptidoglycan cell wall in the periplasm. Acts as a porin with low permeability that allows slow penetration of small solutes; an internal gate slows down solute passage. Required for conjugation with F-type plasmids; probably serves as the mating receptor on recipient cells. This Klebsiella aerogenes (Enterobacter aerogenes) protein is Outer membrane protein A.